A 244-amino-acid chain; its full sequence is tRNA (guanine-N(1)-)-methyltransferase (244 aa).

S-adenosyl-L-methionine contacts are provided by residues G120 and 140–145 (IGDYIL).

It belongs to the RNA methyltransferase TrmD family. Homodimer.

The protein localises to the cytoplasm. The enzyme catalyses guanosine(37) in tRNA + S-adenosyl-L-methionine = N(1)-methylguanosine(37) in tRNA + S-adenosyl-L-homocysteine + H(+). Specifically methylates guanosine-37 in various tRNAs. The sequence is that of tRNA (guanine-N(1)-)-methyltransferase from Brucella abortus (strain S19).